Here is a 125-residue protein sequence, read N- to C-terminus: MIWQGRSRRKPSGGFYRKARKKRKYELGREQVETLIGERKVKKIRVRGGNYKLKLFADKYANVYDPKQGKVVRVEIESVVENPAHVHYARRNVITKGAIIATSIGKARVTNRPSQEGVVNAVLIE.

Residues M1 to R20 form a disordered region.

It belongs to the eukaryotic ribosomal protein eS8 family. As to quaternary structure, part of the 30S ribosomal subunit.

This is Small ribosomal subunit protein eS8 (rps8e) from Archaeoglobus fulgidus (strain ATCC 49558 / DSM 4304 / JCM 9628 / NBRC 100126 / VC-16).